The primary structure comprises 307 residues: 4-hydroxythreonine-4-phosphate dehydrogenase (307 aa).

Substrate-binding residues include histidine 121 and threonine 122. Positions 150, 189, and 246 each coordinate a divalent metal cation. Substrate contacts are provided by lysine 254, asparagine 263, and arginine 272.

Belongs to the PdxA family. In terms of assembly, homodimer. Zn(2+) is required as a cofactor. Requires Mg(2+) as cofactor. The cofactor is Co(2+).

It localises to the cytoplasm. The catalysed reaction is 4-(phosphooxy)-L-threonine + NAD(+) = 3-amino-2-oxopropyl phosphate + CO2 + NADH. It functions in the pathway cofactor biosynthesis; pyridoxine 5'-phosphate biosynthesis; pyridoxine 5'-phosphate from D-erythrose 4-phosphate: step 4/5. Its function is as follows. Catalyzes the NAD(P)-dependent oxidation of 4-(phosphooxy)-L-threonine (HTP) into 2-amino-3-oxo-4-(phosphooxy)butyric acid which spontaneously decarboxylates to form 3-amino-2-oxopropyl phosphate (AHAP). This Campylobacter fetus subsp. fetus (strain 82-40) protein is 4-hydroxythreonine-4-phosphate dehydrogenase.